We begin with the raw amino-acid sequence, 227 residues long: Germin-like protein 3-5 (227 aa).

Positions Met1–Ala29 are cleaved as a signal peptide. An intrachain disulfide couples Cys36 to Cys51. A Cupin type-1 domain is found at Ser65–Glu217. Residues Asn78 and Asn81 are each glycosylated (N-linked (GlcNAc...) asparagine). 4 residues coordinate Mn(2+): His114, His116, Glu121, and His163.

Belongs to the germin family. Oligomer (believed to be a pentamer but probably hexamer).

It is found in the secreted. The protein localises to the extracellular space. It localises to the apoplast. In terms of biological role, may play a role in plant defense. Probably has no oxalate oxidase activity even if the active site is conserved. The protein is Germin-like protein 3-5 of Oryza sativa subsp. japonica (Rice).